Here is a 341-residue protein sequence, read N- to C-terminus: 1-aminocyclopropane-1-carboxylate deaminase (341 aa).

N-acetylserine is present on S1. At K51 the chain carries N6-(pyridoxal phosphate)lysine. The Nucleophile role is filled by S78.

This sequence belongs to the ACC deaminase/D-cysteine desulfhydrase family. As to quaternary structure, homodimer. It depends on pyridoxal 5'-phosphate as a cofactor.

It catalyses the reaction 1-aminocyclopropane-1-carboxylate + H2O = 2-oxobutanoate + NH4(+). Functionally, catalyzes a cyclopropane ring-opening reaction, the irreversible conversion of 1-aminocyclopropane-1-carboxylate (ACC) to ammonia and alpha-ketobutyrate. The polypeptide is 1-aminocyclopropane-1-carboxylate deaminase (Cyberlindnera saturnus (Yeast)).